The sequence spans 331 residues: Protein MGF 300-4L (331 aa).

Belongs to the asfivirus MGF 300 family.

The protein is Protein MGF 300-4L of African swine fever virus (isolate Tick/Malawi/Lil 20-1/1983) (ASFV).